The sequence spans 179 residues: Gene 49 protein (179 aa).

Disordered regions lie at residues 1–38 (MKGN…VTTA) and 102–137 (HYAG…GEKR). Positions 18-28 (QPEPAPAPEPE) are enriched in pro residues. A compositionally biased stretch (low complexity) spans 29–38 (TAPSATVTTA). The segment covering 104-119 (AGSGGSAPANGGGGGQ) has biased composition (gly residues). Residues 120–132 (QQSRAPQAAQEAP) are compositionally biased toward low complexity.

The chain is Gene 49 protein (49) from Mycobacterium (Mycobacteriophage L5).